A 432-amino-acid chain; its full sequence is Trigger factor (432 aa).

Residues 161–246 (EDRVTIDFSG…LKKVEERELP (86 aa)) form the PPIase FKBP-type domain.

This sequence belongs to the FKBP-type PPIase family. Tig subfamily.

It is found in the cytoplasm. It carries out the reaction [protein]-peptidylproline (omega=180) = [protein]-peptidylproline (omega=0). Its function is as follows. Involved in protein export. Acts as a chaperone by maintaining the newly synthesized protein in an open conformation. Functions as a peptidyl-prolyl cis-trans isomerase. The protein is Trigger factor of Enterobacter sp. (strain 638).